The chain runs to 473 residues: Cannabinoid receptor 1 (473 aa).

The Extracellular segment spans residues 1 to 118 (MKSILDGLAD…CFMILTASQQ (118 aa)). The required for mitochondrial localization stretch occupies residues 2–23 (KSILDGLADTTFRTITTDLLYM). Asn-79 and Asn-85 each carry an N-linked (GlcNAc...) asparagine glycan. Residues 119 to 144 (LIIAVLSLTLGTFTVLENFLVLCVIL) traverse the membrane as a helical segment. Topologically, residues 145–156 (QSRTLRCRPSYH) are cytoplasmic. A helical transmembrane segment spans residues 157–177 (FIGSLAVADLLGSVIFVYSFL). The Extracellular segment spans residues 178–189 (DFHVFHRKDSSN). The helical transmembrane segment at 190 to 214 (VFLFKLGGVTASFTASVGSLFLTAI) threads the bilayer. At 215–234 (DRYISIHRPLAYKRIVTRTK) the chain is on the cytoplasmic side. The chain crosses the membrane as a helical span at residues 235 to 257 (AVIAFCVMWTIAIIIAVLPLLGW). The Extracellular portion of the chain corresponds to 258 to 275 (NCKKLKSVCSDIFPLIDE). Residues 276-301 (NYLMFWIGVTSILLLFIVYAYVYILW) form a helical membrane-spanning segment. Residues 302–346 (KAHSHAVRMLQRGTQKSIIIHTSEDGKVQITRPEQTRMDIRLAKT) lie on the Cytoplasmic side of the membrane. Residues 347–367 (LVLILVVLIICWGPLLAIMVY) form a helical membrane-spanning segment. Residues 368-379 (DVFGKMNNPIKT) are Extracellular-facing. The chain crosses the membrane as a helical span at residues 380 to 401 (VFAFCSMLCLMDSTVNPIIYAL). Residues 402–473 (RSQDLRHAFL…VSTETSGEAV (72 aa)) lie on the Cytoplasmic side of the membrane. A lipid anchor (S-palmitoyl cysteine) is attached at Cys-417.

This sequence belongs to the G-protein coupled receptor 1 family. In terms of processing, palmitoylation at Cys-417 is important for recruitment at both plasma membrane and lipid rafts and association with G protein alpha subunits.

Its subcellular location is the cell membrane. It is found in the mitochondrion outer membrane. It localises to the cell projection. The protein resides in the axon. The protein localises to the presynapse. Its activity is regulated as follows. Hemopressin, a peptide derived from hemoglobin subunit alpha (HBA1 and/or HBA2), acts as an antagonist peptide: hemopressin-binding efficiently blocks cannabinoid receptor CNR1 and subsequent signaling. G-protein coupled receptor for cannabinoids. Mediates many cannabinoid-induced effects in the central nervous system (CNS), as well as in peripheral tissues. Regulates cellular respiration and energy production in response to cannabinoids. Signaling typically involves reduction in cyclic AMP. The protein is Cannabinoid receptor 1 (CNR1) of Taricha granulosa (Roughskin newt).